A 183-amino-acid polypeptide reads, in one-letter code: ATP synthase subunit delta (183 aa).

Belongs to the ATPase delta chain family. In terms of assembly, F-type ATPases have 2 components, F(1) - the catalytic core - and F(0) - the membrane proton channel. F(1) has five subunits: alpha(3), beta(3), gamma(1), delta(1), epsilon(1). F(0) has three main subunits: a(1), b(2) and c(10-14). The alpha and beta chains form an alternating ring which encloses part of the gamma chain. F(1) is attached to F(0) by a central stalk formed by the gamma and epsilon chains, while a peripheral stalk is formed by the delta and b chains.

The protein resides in the cell inner membrane. In terms of biological role, f(1)F(0) ATP synthase produces ATP from ADP in the presence of a proton or sodium gradient. F-type ATPases consist of two structural domains, F(1) containing the extramembraneous catalytic core and F(0) containing the membrane proton channel, linked together by a central stalk and a peripheral stalk. During catalysis, ATP synthesis in the catalytic domain of F(1) is coupled via a rotary mechanism of the central stalk subunits to proton translocation. Its function is as follows. This protein is part of the stalk that links CF(0) to CF(1). It either transmits conformational changes from CF(0) to CF(1) or is implicated in proton conduction. The protein is ATP synthase subunit delta of Desulfatibacillum aliphaticivorans.